A 79-amino-acid chain; its full sequence is Conotoxin ArMSGL-0124 (79 aa).

The first 20 residues, 1-20, serve as a signal peptide directing secretion; the sequence is MSRLGIMVLTLLLLVYMATS. The propeptide occupies 21–44; that stretch reads HQDAGEKQATQRDAINFRWKRSLT. 3 cysteine pairs are disulfide-bonded: C52-C64, C56-C73, and C63-C77. L78 carries the leucine amide modification.

The protein belongs to the conotoxin O3 superfamily. In terms of tissue distribution, expressed by the venom duct.

It is found in the secreted. This Conus arenatus (Sand-dusted cone) protein is Conotoxin ArMSGL-0124.